A 404-amino-acid chain; its full sequence is Formate-dependent phosphoribosylglycinamide formyltransferase (404 aa).

N(1)-(5-phospho-beta-D-ribosyl)glycinamide is bound by residues 25 to 26 and Glu85; that span reads EL. ATP-binding positions include Arg118, Lys159, 164-169, 199-202, and Glu207; these read SSGKGQ and EGFI. The region spanning 123–318 is the ATP-grasp domain; the sequence is RLAAEELGLP…EFELHARAIL (196 aa). Mg(2+)-binding residues include Glu277 and Glu289. N(1)-(5-phospho-beta-D-ribosyl)glycinamide is bound by residues Asp296, Lys365, and 372-373; that span reads RR.

The protein belongs to the PurK/PurT family. Homodimer.

The catalysed reaction is N(1)-(5-phospho-beta-D-ribosyl)glycinamide + formate + ATP = N(2)-formyl-N(1)-(5-phospho-beta-D-ribosyl)glycinamide + ADP + phosphate + H(+). The protein operates within purine metabolism; IMP biosynthesis via de novo pathway; N(2)-formyl-N(1)-(5-phospho-D-ribosyl)glycinamide from N(1)-(5-phospho-D-ribosyl)glycinamide (formate route): step 1/1. Functionally, involved in the de novo purine biosynthesis. Catalyzes the transfer of formate to 5-phospho-ribosyl-glycinamide (GAR), producing 5-phospho-ribosyl-N-formylglycinamide (FGAR). Formate is provided by PurU via hydrolysis of 10-formyl-tetrahydrofolate. In Burkholderia lata (strain ATCC 17760 / DSM 23089 / LMG 22485 / NCIMB 9086 / R18194 / 383), this protein is Formate-dependent phosphoribosylglycinamide formyltransferase.